Here is a 710-residue protein sequence, read N- to C-terminus: DNA ligase (710 aa).

NAD(+) is bound by residues 53-57 (DAEYD), 102-103 (SL), and E136. Residue K138 is the N6-AMP-lysine intermediate of the active site. Residues R159, E196, K312, and K336 each contribute to the NAD(+) site. Positions 429, 432, 453, and 459 each coordinate Zn(2+). The BRCT domain maps to 633-710 (ETSSPVAGKT…DEDQWIELAG (78 aa)).

Belongs to the NAD-dependent DNA ligase family. LigA subfamily. The cofactor is Mg(2+). It depends on Mn(2+) as a cofactor.

It carries out the reaction NAD(+) + (deoxyribonucleotide)n-3'-hydroxyl + 5'-phospho-(deoxyribonucleotide)m = (deoxyribonucleotide)n+m + AMP + beta-nicotinamide D-nucleotide.. DNA ligase that catalyzes the formation of phosphodiester linkages between 5'-phosphoryl and 3'-hydroxyl groups in double-stranded DNA using NAD as a coenzyme and as the energy source for the reaction. It is essential for DNA replication and repair of damaged DNA. This Parvibaculum lavamentivorans (strain DS-1 / DSM 13023 / NCIMB 13966) protein is DNA ligase.